The sequence spans 182 residues: Ribosome maturation factor RimM (182 aa).

Residues 103-182 (VGDYYWKDLI…TIEVDWDPGF (80 aa)) form the PRC barrel domain.

It belongs to the RimM family. Binds ribosomal protein uS19.

Its subcellular location is the cytoplasm. Its function is as follows. An accessory protein needed during the final step in the assembly of 30S ribosomal subunit, possibly for assembly of the head region. Essential for efficient processing of 16S rRNA. May be needed both before and after RbfA during the maturation of 16S rRNA. It has affinity for free ribosomal 30S subunits but not for 70S ribosomes. In Pectobacterium atrosepticum (strain SCRI 1043 / ATCC BAA-672) (Erwinia carotovora subsp. atroseptica), this protein is Ribosome maturation factor RimM.